Here is a 381-residue protein sequence, read N- to C-terminus: Cytosolic acyl coenzyme A thioester hydrolase (381 aa).

One can recognise a HotDog ACOT-type 1 domain in the interval leucine 51–lysine 169. Asparagine 67 is a catalytic residue. An N6-acetyllysine mark is found at lysine 169 and lysine 199. Positions serine 225–glutamate 339 constitute a HotDog ACOT-type 2 domain. Aspartate 256 is an active-site residue. At lysine 284 the chain carries N6-acetyllysine. The disordered stretch occupies residues proline 342–proline 381. Residues aspartate 354–glycine 364 show a composition bias toward basic and acidic residues.

In terms of assembly, homohexamer. In terms of tissue distribution, widely expressed with highest levels in brain. High levels also found in thymus, large intestine and testis. Negligible in muscle and adipose tissue. In the central and peripheral nervous systems, displays a predominantly neuronal localization with highest expression in cell bodies and neurites.

It is found in the cytoplasm. Its subcellular location is the cytosol. The enzyme catalyses hexadecanoyl-CoA + H2O = hexadecanoate + CoA + H(+). The catalysed reaction is dodecanoyl-CoA + H2O = dodecanoate + CoA + H(+). It carries out the reaction tetradecanoyl-CoA + H2O = tetradecanoate + CoA + H(+). It catalyses the reaction decanoyl-CoA + H2O = decanoate + CoA + H(+). The enzyme catalyses octanoyl-CoA + H2O = octanoate + CoA + H(+). The catalysed reaction is octadecanoyl-CoA + H2O = octadecanoate + CoA + H(+). It carries out the reaction (9Z)-octadecenoyl-CoA + H2O = (9Z)-octadecenoate + CoA + H(+). It functions in the pathway lipid metabolism; fatty acid metabolism. Its function is as follows. Catalyzes the hydrolysis of acyl-CoAs into free fatty acids and coenzyme A (CoASH), regulating their respective intracellular levels. Preferentially hydrolyzes palmitoyl-CoA, but has a broad specificity acting on other fatty acyl-CoAs with chain-lengths of C8-C18. May play an important physiological function in brain. The polypeptide is Cytosolic acyl coenzyme A thioester hydrolase (Acot7) (Mus musculus (Mouse)).